We begin with the raw amino-acid sequence, 294 residues long: Nucleotide-binding protein CLK_2809 (294 aa).

Position 8–15 (8–15) interacts with ATP; that stretch reads GLSGAGKT. 59–62 is a GTP binding site; sequence DIRG.

The protein belongs to the RapZ-like family.

In terms of biological role, displays ATPase and GTPase activities. The protein is Nucleotide-binding protein CLK_2809 of Clostridium botulinum (strain Loch Maree / Type A3).